The following is a 704-amino-acid chain: MKSPCRAAAGWLVLLLSSCCLGYVIATEWAAAVTTDNGILFFDSNWRKISSAAHQYSRISAFAYDEVLGKLYFADLDHPEYRLFALDYDDTDELHKVTKLLPKSAQTAYISGMAFDHLERRLYWTEKGTRSVYYVAIDELLSSTRSAAAAANGTAAAAATAVEATTSAPPPSSSSPVQLVATVQPDHELAGLAIDECRRHLYWTNCYPKTSNIVRAAMNGTVLNVHEEQVYLPKGITVDHYRNRLYWVEKKYGRRYTIESADLEVNDQRTLQTGLDRLPADIAVKNDYIYWTDQENNEIYEMSKEPNAPSRTVYRGEHPSAVILRANLLLEHQRNNPDCRSVVDRILENMQNSKPASVLQQETQQQGQLTVCLNNGTVNHHTNTCLCQPAFGGKLCEIDLCNNYCAQGSCRIGRDNRPRCDCDRRYEGDRCDRNRCDGFCLNGGRCQFSNGTAGRTEEEMGDRTCLCESTGYSGARCENPICGTDYCYNGECYVEEGKRPKCRCKAGYRGERCEEYSCNNYCLNGGHCTLGNETTVPECECGEEFAGQRCEIAVRLCSTYNEDPQWQQYCLGISKTLPLMEPKVTYCKESFNRTVVYTSLCFTVSFALLLAVVLVVSRMMKPPRPRITKKMVVTPMTSRPPTTQCEITIENCCNMNVCETPCFDTKLLKKSKKEDKQFLLEDIEDVGGSYRKLPNCGDGTAERK.

Residues 1–26 form the signal peptide; sequence MKSPCRAAAGWLVLLLSSCCLGYVIA. Residues 27-594 lie on the Extracellular side of the membrane; it reads TEWAAAVTTD…TYCKESFNRT (568 aa). LDL-receptor class B repeat units lie at residues 69–119, 120–166, 199–242, and 243–288; these read GKLY…DHLE, RRLY…EATT, RHLY…DHYR, and NRLY…KNDY. N-linked (GlcNAc...) asparagine glycans are attached at residues asparagine 152 and asparagine 219. EGF-like domains are found at residues 363–397, 432–478, and 514–551; these read TQQQGQLTVCLNNGTVNHHTNTCLCQPAFGGKLCE, DRNR…ARCE, and EEYSCNNYCLNGGHCTLGNETTVPECECGEEFAGQRCE. 8 cysteine pairs are disulfide-bonded: cysteine 372–cysteine 385, cysteine 387–cysteine 396, cysteine 436–cysteine 446, cysteine 440–cysteine 465, cysteine 467–cysteine 477, cysteine 518–cysteine 528, cysteine 522–cysteine 539, and cysteine 541–cysteine 550. Asparagine 375 is a glycosylation site (N-linked (GlcNAc...) asparagine). Asparagine 450 carries an N-linked (GlcNAc...) asparagine glycan. Asparagine 532 carries N-linked (GlcNAc...) asparagine glycosylation. Asparagine 592 is a glycosylation site (N-linked (GlcNAc...) asparagine). A helical membrane pass occupies residues 595–615; the sequence is VVYTSLCFTVSFALLLAVVLV. Residues 616 to 704 lie on the Cytoplasmic side of the membrane; sequence VSRMMKPPRP…NCGDGTAERK (89 aa).

It belongs to the cueball family.

It is found in the cell membrane. Has a role in spermatogenesis and oogenesis. The sequence is that of Protein cueball from Anopheles gambiae (African malaria mosquito).